Consider the following 136-residue polypeptide: Protein K5 (136 aa).

It belongs to the poxviridae K5 protein family.

This chain is Protein K5, found in Homo sapiens (Human).